A 519-amino-acid polypeptide reads, in one-letter code: Bifunctional purine biosynthesis protein PurH (519 aa).

The MGS-like domain maps to 1-145 (MQPIQRALIS…KNHASVTVVV (145 aa)).

Belongs to the PurH family.

The catalysed reaction is (6R)-10-formyltetrahydrofolate + 5-amino-1-(5-phospho-beta-D-ribosyl)imidazole-4-carboxamide = 5-formamido-1-(5-phospho-D-ribosyl)imidazole-4-carboxamide + (6S)-5,6,7,8-tetrahydrofolate. It carries out the reaction IMP + H2O = 5-formamido-1-(5-phospho-D-ribosyl)imidazole-4-carboxamide. It participates in purine metabolism; IMP biosynthesis via de novo pathway; 5-formamido-1-(5-phospho-D-ribosyl)imidazole-4-carboxamide from 5-amino-1-(5-phospho-D-ribosyl)imidazole-4-carboxamide (10-formyl THF route): step 1/1. It functions in the pathway purine metabolism; IMP biosynthesis via de novo pathway; IMP from 5-formamido-1-(5-phospho-D-ribosyl)imidazole-4-carboxamide: step 1/1. The polypeptide is Bifunctional purine biosynthesis protein PurH (Allochromatium vinosum (strain ATCC 17899 / DSM 180 / NBRC 103801 / NCIMB 10441 / D) (Chromatium vinosum)).